We begin with the raw amino-acid sequence, 346 residues long: Coproporphyrin III ferrochelatase (346 aa).

2 residues coordinate Fe-coproporphyrin III: S52 and Y121. Positions 181 and 264 each coordinate Fe(2+).

The protein belongs to the ferrochelatase family.

It is found in the cytoplasm. It carries out the reaction Fe-coproporphyrin III + 2 H(+) = coproporphyrin III + Fe(2+). It participates in porphyrin-containing compound metabolism; protoheme biosynthesis. Its function is as follows. Involved in coproporphyrin-dependent heme b biosynthesis. Catalyzes the insertion of ferrous iron into coproporphyrin III to form Fe-coproporphyrin III. This Mycobacterium sp. (strain KMS) protein is Coproporphyrin III ferrochelatase.